A 500-amino-acid chain; its full sequence is MNLKPEEISSIIKQQIKNYENKVELTDTGSVLTVGDGIASVYGLEKAMSGELLEFPGEIYGMALNLEEEVVGAVILGDDSEIKEGDIVKRTGRIVEVPVGEALIGRVVNSLGQPIDGKGPIAYTKTRPVESEAPGIIDRRSVYEPLQTGIKSIDSMIPIGRGQRELIIGDRQTGKTSIVIDTILNQKGKDVICIYVAIGQKRSTIAQLVSSLEKGGALDYTIVVSATASESAPLQYIAPYAGAAMGEEFMYNGKHVLIVYDDLSKQAVAYREMSLLLRRPPGREAYPGDVFYLHSRLLERAAKLSDELGGGSMTALPIIETQAGDVSAYIPTNVISITDGQIYLQPELFYSGVRPAVDPGISVSRVGGSAQIKAMKKVAGTLKLAYSQYRELAAFSQFGSDLDEDTKKRLAQGERIVEILKQGEHQPIKVENQVMIIYAVINNHLEDIPIDNIARFESELYAFVDNNYPEISRKILGGEDFTHDLTDAINEFKEKFVVEV.

169 to 176 (GDRQTGKT) serves as a coordination point for ATP.

It belongs to the ATPase alpha/beta chains family. As to quaternary structure, F-type ATPases have 2 components, CF(1) - the catalytic core - and CF(0) - the membrane proton channel. CF(1) has five subunits: alpha(3), beta(3), gamma(1), delta(1), epsilon(1). CF(0) has three main subunits: a(1), b(2) and c(9-12). The alpha and beta chains form an alternating ring which encloses part of the gamma chain. CF(1) is attached to CF(0) by a central stalk formed by the gamma and epsilon chains, while a peripheral stalk is formed by the delta and b chains.

It is found in the cell membrane. The catalysed reaction is ATP + H2O + 4 H(+)(in) = ADP + phosphate + 5 H(+)(out). In terms of biological role, produces ATP from ADP in the presence of a proton gradient across the membrane. The alpha chain is a regulatory subunit. The polypeptide is ATP synthase subunit alpha (Clostridioides difficile (strain 630) (Peptoclostridium difficile)).